A 599-amino-acid polypeptide reads, in one-letter code: Elongation factor 4 (599 aa).

In terms of domain architecture, tr-type G spans 2 to 184; sequence KNIRNFSIIA…RLVRDIPPPQ (183 aa). Residues 14–19 and 131–134 contribute to the GTP site; these read DHGKST and NKID.

This sequence belongs to the TRAFAC class translation factor GTPase superfamily. Classic translation factor GTPase family. LepA subfamily.

The protein localises to the cell inner membrane. The catalysed reaction is GTP + H2O = GDP + phosphate + H(+). Required for accurate and efficient protein synthesis under certain stress conditions. May act as a fidelity factor of the translation reaction, by catalyzing a one-codon backward translocation of tRNAs on improperly translocated ribosomes. Back-translocation proceeds from a post-translocation (POST) complex to a pre-translocation (PRE) complex, thus giving elongation factor G a second chance to translocate the tRNAs correctly. Binds to ribosomes in a GTP-dependent manner. The polypeptide is Elongation factor 4 (Salmonella paratyphi A (strain ATCC 9150 / SARB42)).